The primary structure comprises 38 residues: Photosystem II reaction center protein L (38 aa).

Residues 17 to 37 (SLFWGLLLIFILAVLFSSYFF) traverse the membrane as a helical segment.

The protein belongs to the PsbL family. In terms of assembly, PSII is composed of 1 copy each of membrane proteins PsbA, PsbB, PsbC, PsbD, PsbE, PsbF, PsbH, PsbI, PsbJ, PsbK, PsbL, PsbM, PsbT, PsbX, PsbY, PsbZ, Psb30/Ycf12, at least 3 peripheral proteins of the oxygen-evolving complex and a large number of cofactors. It forms dimeric complexes.

The protein resides in the plastid. Its subcellular location is the chloroplast thylakoid membrane. Its function is as follows. One of the components of the core complex of photosystem II (PSII). PSII is a light-driven water:plastoquinone oxidoreductase that uses light energy to abstract electrons from H(2)O, generating O(2) and a proton gradient subsequently used for ATP formation. It consists of a core antenna complex that captures photons, and an electron transfer chain that converts photonic excitation into a charge separation. This subunit is found at the monomer-monomer interface and is required for correct PSII assembly and/or dimerization. This Guillardia theta (Cryptophyte) protein is Photosystem II reaction center protein L.